The chain runs to 243 residues: Glutathione S-transferase omega-2 (243 aa).

A GST N-terminal domain is found at glycine 22–lysine 101. Cysteine 32 serves as the catalytic Nucleophile. Glutathione-binding positions include lysine 59, isoleucine 72, and glutamate 85–serine 86. Residues aspartate 106–phenylalanine 231 enclose the GST C-terminal domain.

This sequence belongs to the GST superfamily. Omega family. In terms of tissue distribution, expressed in a range of tissues, including the liver, kidney, skeletal muscle and prostate. Strongest expression in the testis.

It catalyses the reaction RX + glutathione = an S-substituted glutathione + a halide anion + H(+). The catalysed reaction is L-dehydroascorbate + 2 glutathione = glutathione disulfide + L-ascorbate. The enzyme catalyses methylarsonate + 2 glutathione + H(+) = methylarsonous acid + glutathione disulfide + H2O. Exhibits glutathione-dependent thiol transferase activity. Has high dehydroascorbate reductase activity and may contribute to the recycling of ascorbic acid. Participates in the biotransformation of inorganic arsenic and reduces monomethylarsonic acid (MMA). The sequence is that of Glutathione S-transferase omega-2 (GSTO2) from Homo sapiens (Human).